Reading from the N-terminus, the 82-residue chain is Precursor of CEP3 (82 aa).

The first 24 residues, 1 to 24 (MATINVYVFAFIFLLTISVGSIEG), serve as a signal peptide directing secretion. Residues 25-63 (RKLTKFTVTTSEEIRAGGSVLSSSPPTEPLESPPSHGVD) constitute a propeptide that is removed on maturation. Residues 40–82 (AGGSVLSSSPPTEPLESPPSHGVDTFRPTEPGHSPGIGHSVHN) are disordered. 3 positions are modified to hydroxyproline: P67, P70, and P74. A propeptide spanning residues 79-82 (SVHN) is cleaved from the precursor.

This sequence belongs to the C-terminally encoded plant signaling peptide (CEP) family. As to quaternary structure, interacts with the CEP receptor CEPR1. In terms of processing, the mature small signaling peptide is generated by proteolytic processing of the longer precursor. Mostly expressed in roots. Present in lateral roots (especially in vasculature), root-hypocotyl junction and cotyledons.

Its subcellular location is the secreted. It is found in the extracellular space. It localises to the apoplast. Extracellular signaling peptide that represses primary root growth rate and significantly inhibits lateral root formation. Promotes shoot growth. Modulates leaf morphology. Regulates systemic nitrogen (N)-demand signaling. Mediates systemic up-regulation of genes involved in N uptake and assimilation pathways. In Arabidopsis thaliana (Mouse-ear cress), this protein is Precursor of CEP3.